A 520-amino-acid chain; its full sequence is Probable cytochrome P450 6v1 (520 aa).

Heme is bound at residue C465.

This sequence belongs to the cytochrome P450 family. The cofactor is heme.

The protein resides in the endoplasmic reticulum membrane. The protein localises to the microsome membrane. Its function is as follows. May be involved in the metabolism of insect hormones and in the breakdown of synthetic insecticides. This chain is Probable cytochrome P450 6v1 (Cyp6v1), found in Drosophila melanogaster (Fruit fly).